A 133-amino-acid polypeptide reads, in one-letter code: NAD(P)H-quinone oxidoreductase subunit 3 (133 aa).

A run of 3 helical transmembrane segments spans residues 22 to 44, 77 to 97, and 102 to 122; these read YLLG…SRLL, MFAL…PWAV, and LGLL…VGLA.

Belongs to the complex I subunit 3 family. NDH-1 can be composed of about 15 different subunits; different subcomplexes with different compositions have been identified which probably have different functions.

The protein resides in the cellular thylakoid membrane. It catalyses the reaction a plastoquinone + NADH + (n+1) H(+)(in) = a plastoquinol + NAD(+) + n H(+)(out). It carries out the reaction a plastoquinone + NADPH + (n+1) H(+)(in) = a plastoquinol + NADP(+) + n H(+)(out). NDH-1 shuttles electrons from an unknown electron donor, via FMN and iron-sulfur (Fe-S) centers, to quinones in the respiratory and/or the photosynthetic chain. The immediate electron acceptor for the enzyme in this species is believed to be plastoquinone. Couples the redox reaction to proton translocation, and thus conserves the redox energy in a proton gradient. Cyanobacterial NDH-1 also plays a role in inorganic carbon-concentration. This chain is NAD(P)H-quinone oxidoreductase subunit 3, found in Synechococcus sp. (strain ATCC 27144 / PCC 6301 / SAUG 1402/1) (Anacystis nidulans).